We begin with the raw amino-acid sequence, 303 residues long: Dihydroorotate dehydrogenase B (NAD(+)), catalytic subunit (303 aa).

Residues Ser21 and 45–46 (KG) each bind FMN. Residues Lys45 and 69–73 (NAVGL) each bind substrate. Residues Asn99 and Asn127 each contribute to the FMN site. Position 127 (Asn127) interacts with substrate. Catalysis depends on Cys130, which acts as the Nucleophile. FMN contacts are provided by Lys165 and Ile191. 192-193 (NT) lines the substrate pocket. FMN contacts are provided by residues Gly217, 243–244 (GG), and 265–266 (GT).

This sequence belongs to the dihydroorotate dehydrogenase family. Type 1 subfamily. As to quaternary structure, heterotetramer of 2 PyrK and 2 PyrD type B subunits. Requires FMN as cofactor.

The protein resides in the cytoplasm. The enzyme catalyses (S)-dihydroorotate + NAD(+) = orotate + NADH + H(+). It participates in pyrimidine metabolism; UMP biosynthesis via de novo pathway; orotate from (S)-dihydroorotate (NAD(+) route): step 1/1. Functionally, catalyzes the conversion of dihydroorotate to orotate with NAD(+) as electron acceptor. In Bacteroides thetaiotaomicron (strain ATCC 29148 / DSM 2079 / JCM 5827 / CCUG 10774 / NCTC 10582 / VPI-5482 / E50), this protein is Dihydroorotate dehydrogenase B (NAD(+)), catalytic subunit (pyrD).